The primary structure comprises 344 residues: Ribosomal RNA small subunit methyltransferase H 2 (344 aa).

Residues 78-80 (GGH), Asp98, Phe131, Asp145, and Gln152 each bind S-adenosyl-L-methionine.

It belongs to the methyltransferase superfamily. RsmH family.

The protein resides in the cytoplasm. The enzyme catalyses cytidine(1402) in 16S rRNA + S-adenosyl-L-methionine = N(4)-methylcytidine(1402) in 16S rRNA + S-adenosyl-L-homocysteine + H(+). In terms of biological role, specifically methylates the N4 position of cytidine in position 1402 (C1402) of 16S rRNA. This chain is Ribosomal RNA small subunit methyltransferase H 2, found in Acholeplasma laidlawii (strain PG-8A).